We begin with the raw amino-acid sequence, 523 residues long: Type 2 DNA topoisomerase 6 subunit B (523 aa).

ATP-binding positions include asparagine 48, aspartate 80, 101–102 (SK), 110–117 (GQQGLGCS), and lysine 436.

This sequence belongs to the TOP6B family. Homodimer. Heterotetramer of two Top6A and two Top6B chains.

It catalyses the reaction ATP-dependent breakage, passage and rejoining of double-stranded DNA.. Functionally, relaxes both positive and negative superturns and exhibits a strong decatenase activity. This is Type 2 DNA topoisomerase 6 subunit B from Methanothermobacter thermautotrophicus (strain ATCC 29096 / DSM 1053 / JCM 10044 / NBRC 100330 / Delta H) (Methanobacterium thermoautotrophicum).